A 282-amino-acid polypeptide reads, in one-letter code: NADPH-dependent 7-cyano-7-deazaguanine reductase (282 aa).

Residue 88-90 coordinates substrate; it reads IES. 90–91 provides a ligand contact to NADPH; the sequence is SK. Catalysis depends on Cys-190, which acts as the Thioimide intermediate. Asp-197 functions as the Proton donor in the catalytic mechanism. 229–230 provides a ligand contact to substrate; it reads HE. 258 to 259 provides a ligand contact to NADPH; the sequence is RG.

It belongs to the GTP cyclohydrolase I family. QueF type 2 subfamily. As to quaternary structure, homodimer.

Its subcellular location is the cytoplasm. It catalyses the reaction 7-aminomethyl-7-carbaguanine + 2 NADP(+) = 7-cyano-7-deazaguanine + 2 NADPH + 3 H(+). Its pathway is tRNA modification; tRNA-queuosine biosynthesis. Its function is as follows. Catalyzes the NADPH-dependent reduction of 7-cyano-7-deazaguanine (preQ0) to 7-aminomethyl-7-deazaguanine (preQ1). This Salmonella heidelberg (strain SL476) protein is NADPH-dependent 7-cyano-7-deazaguanine reductase.